A 909-amino-acid chain; its full sequence is Alanine--tRNA ligase (909 aa).

4 residues coordinate Zn(2+): H600, H604, C704, and H708.

It belongs to the class-II aminoacyl-tRNA synthetase family. Requires Zn(2+) as cofactor.

The protein localises to the cytoplasm. It carries out the reaction tRNA(Ala) + L-alanine + ATP = L-alanyl-tRNA(Ala) + AMP + diphosphate. Its function is as follows. Catalyzes the attachment of alanine to tRNA(Ala) in a two-step reaction: alanine is first activated by ATP to form Ala-AMP and then transferred to the acceptor end of tRNA(Ala). Also edits incorrectly charged Ser-tRNA(Ala) and Gly-tRNA(Ala) via its editing domain. The protein is Alanine--tRNA ligase of Staphylothermus marinus (strain ATCC 43588 / DSM 3639 / JCM 9404 / F1).